Here is a 206-residue protein sequence, read N- to C-terminus: Ribonuclease HII (206 aa).

The RNase H type-2 domain maps to 27-206 (ARIAGVDEAG…CALHRRSFKH (180 aa)). A divalent metal cation-binding residues include D33, E34, and D125.

The protein belongs to the RNase HII family. Mn(2+) serves as cofactor. The cofactor is Mg(2+).

It is found in the cytoplasm. It catalyses the reaction Endonucleolytic cleavage to 5'-phosphomonoester.. Endonuclease that specifically degrades the RNA of RNA-DNA hybrids. The sequence is that of Ribonuclease HII from Moorella thermoacetica (strain ATCC 39073 / JCM 9320).